We begin with the raw amino-acid sequence, 499 residues long: MINKKISLGVLSILTAFSLQSVSYACTGFIIGKDLTKDGSLLYGRTEDLEPHHNKNFIVRLAKDNPAGEKWKDPSNGFEYPLPEHSYRYSAIPDVTPNKGVYDEAGFNEFGVSMSATVSTSANDAIQKIDPYVKNGLAESSMASVILPSVKTAREGVALIAKIVTEKGAAEGNIVTLADKDGIWYMEILSGHQYVAIKFPDDKYAVFPNTFYLGHVDFNDKENTIASEDVEKVAKKAKSYTEVDGKFHIAKSYNPPLNDANRSRSFSGIKSLDPDSKVTYKDSNYELLQSTDKTFSLEDAMKLQRNRFEGLDLKPLDQMALDGKGKPKSKKAVKGYAYPISNPNVMEAHIFQLKKDIPAELGGGVMWLSIGSPRNAPYLPYLGNISRTYEAYQEKSTQYNDKSWYWTVSHINDLVAAHPKPFGTKVIDEMKGLEKTWIAEQDKTTKEISDLVVSDPKAAQEKADKISLDRAEKTFKRLKAIEAKLVKEKPKNKKGLNRS.

The active site involves Cys-26.

Belongs to the peptidase C69 family.

The catalysed reaction is an L-aminoacyl-L-amino acid + H2O = 2 an L-alpha-amino acid. The protein is Probable dipeptidase B (pepDB) of Streptococcus pyogenes serotype M3 (strain ATCC BAA-595 / MGAS315).